The following is a 101-amino-acid chain: Small ribosomal subunit protein uS14 (101 aa).

The protein belongs to the universal ribosomal protein uS14 family. In terms of assembly, part of the 30S ribosomal subunit. Contacts proteins S3 and S10.

In terms of biological role, binds 16S rRNA, required for the assembly of 30S particles and may also be responsible for determining the conformation of the 16S rRNA at the A site. This is Small ribosomal subunit protein uS14 from Buchnera aphidicola subsp. Baizongia pistaciae (strain Bp).